The chain runs to 92 residues: C-C motif chemokine 4 (92 aa).

The signal sequence occupies residues 1 to 23 (MKLCVTVLSLLVLVAAFCSPALS). Disulfide bonds link C34–C58 and C35–C74.

The protein belongs to the intercrine beta (chemokine CC) family. Homodimer. Interacts with CCR5.

It is found in the secreted. Functionally, monokine with inflammatory and chemokinetic properties. The protein is C-C motif chemokine 4 (CCL4) of Canis lupus familiaris (Dog).